A 429-amino-acid polypeptide reads, in one-letter code: Enolase (429 aa).

Residue Gln-167 participates in (2R)-2-phosphoglycerate binding. Glu-209 acts as the Proton donor in catalysis. Mg(2+)-binding residues include Asp-246, Glu-289, and Asp-316. Residues Lys-341, Arg-370, Ser-371, and Lys-392 each contribute to the (2R)-2-phosphoglycerate site. Lys-341 functions as the Proton acceptor in the catalytic mechanism.

It belongs to the enolase family. In terms of assembly, component of the RNA degradosome, a multiprotein complex involved in RNA processing and mRNA degradation. The cofactor is Mg(2+).

It localises to the cytoplasm. Its subcellular location is the secreted. It is found in the cell surface. The catalysed reaction is (2R)-2-phosphoglycerate = phosphoenolpyruvate + H2O. It functions in the pathway carbohydrate degradation; glycolysis; pyruvate from D-glyceraldehyde 3-phosphate: step 4/5. In terms of biological role, catalyzes the reversible conversion of 2-phosphoglycerate (2-PG) into phosphoenolpyruvate (PEP). It is essential for the degradation of carbohydrates via glycolysis. In Pseudomonas putida (strain ATCC 47054 / DSM 6125 / CFBP 8728 / NCIMB 11950 / KT2440), this protein is Enolase.